A 298-amino-acid chain; its full sequence is (S)-ureidoglycine aminohydrolase (298 aa).

A signal peptide spans 1-20; it reads MRSLYLIVFIVISLVKASKS. Residues 222–288 form the Cupin type-2 domain; that stretch reads TMDFQPGEFL…ALGKTRSRYL (67 aa). Glutamate 235, histidine 237, histidine 241, and glutamine 275 together coordinate Mn(2+). Residue glutamate 235 participates in substrate binding. Residues glutamine 275, tyrosine 287, and lysine 291 each contribute to the substrate site.

Belongs to the UGHY family. In terms of assembly, homooctamer. The cofactor is Mn(2+).

It is found in the endoplasmic reticulum. The enzyme catalyses (S)-2-ureidoglycine + H2O = (S)-ureidoglycolate + NH4(+). Involved in the catabolism of purine nucleotides. Can use (S)-2-ureidoglycine as substrate, but not allantoate. The sequential activity of AAH, UGLYAH and UAH allows a complete purine breakdown without the intermediate generation of urea. This is (S)-ureidoglycine aminohydrolase (UGLYAH) from Arabidopsis thaliana (Mouse-ear cress).